A 318-amino-acid chain; its full sequence is Probable endolytic peptidoglycan transglycosylase RlpA (318 aa).

The first 21 residues, 1 to 21 (MMDKRVVAVAAVLWNVQMLFA), serve as a signal peptide directing secretion. The interval 121 to 191 (DPNAHASQQR…GVANTTDVPA (71 aa)) is disordered. The span at 125-137 (HASQQRNDRQTSP) shows a compositional bias: polar residues.

The protein belongs to the RlpA family.

In terms of biological role, lytic transglycosylase with a strong preference for naked glycan strands that lack stem peptides. The sequence is that of Probable endolytic peptidoglycan transglycosylase RlpA from Treponema pallidum (strain Nichols).